Reading from the N-terminus, the 270-residue chain is Oxidoreductase claK (270 aa).

This sequence belongs to the avfA family.

The protein operates within pigment biosynthesis. In terms of biological role, oxidoreductase; part of the gene cluster that mediates the biosynthesis of the bianthraquinone cladofulvin, a conidial pigment not required for virulence but that plays a role in fitness and resistance to environmental stresses including UV light and low-temperature stress. The pathway begins with the synthesis of atrochrysone thioester by the polyketide synthase (PKS) claG. The atrochrysone carboxyl ACP thioesterase claF then breaks the thioester bond and releases the atrochrysone carboxylic acid from claG. This compound is decarboxylated by claH to yield emodin, which is further converted to chrysophanol hydroquinone by the reductase claC and the dehydratase claB. The cytochrome monooxygenase P450 claM then catalyzes the dimerization of nataloe-emodin to cladofulvin. This Passalora fulva (Tomato leaf mold) protein is Oxidoreductase claK.